A 162-amino-acid chain; its full sequence is NADH-quinone oxidoreductase subunit I (162 aa).

2 4Fe-4S ferredoxin-type domains span residues 52 to 82 and 93 to 122; these read LRRYPNGEERCIACKLCEAICPAQAITIEAG and VRYDIDMVKCIYCGLCQEACPVDAIVEGPN. Residues cysteine 62, cysteine 65, cysteine 68, cysteine 72, cysteine 102, cysteine 105, cysteine 108, and cysteine 112 each contribute to the [4Fe-4S] cluster site.

It belongs to the complex I 23 kDa subunit family. NDH-1 is composed of 14 different subunits. Subunits NuoA, H, J, K, L, M, N constitute the membrane sector of the complex. The cofactor is [4Fe-4S] cluster.

Its subcellular location is the cell inner membrane. It catalyses the reaction a quinone + NADH + 5 H(+)(in) = a quinol + NAD(+) + 4 H(+)(out). In terms of biological role, NDH-1 shuttles electrons from NADH, via FMN and iron-sulfur (Fe-S) centers, to quinones in the respiratory chain. The immediate electron acceptor for the enzyme in this species is believed to be ubiquinone. Couples the redox reaction to proton translocation (for every two electrons transferred, four hydrogen ions are translocated across the cytoplasmic membrane), and thus conserves the redox energy in a proton gradient. This chain is NADH-quinone oxidoreductase subunit I, found in Nitrobacter hamburgensis (strain DSM 10229 / NCIMB 13809 / X14).